A 326-amino-acid chain; its full sequence is Histone-lysine N-methyltransferase Suv4-20 (326 aa).

In terms of domain architecture, SET spans 163 to 273; it reads QECTRYSLEG…AGDEITCFYG (111 aa). The disordered stretch occupies residues 294–313; that stretch reads RGKFSTSDEEENDEPSALSE.

It belongs to the class V-like SAM-binding methyltransferase superfamily. Histone-lysine methyltransferase family. Suvar4-20 subfamily.

It is found in the nucleus. The protein localises to the chromosome. The enzyme catalyses N(6)-methyl-L-lysyl(20)-[histone H4] + S-adenosyl-L-methionine = N(6),N(6)-dimethyl-L-lysyl(20)-[histone H4] + S-adenosyl-L-homocysteine + H(+). The catalysed reaction is N(6),N(6)-dimethyl-L-lysyl(20)-[histone H4] + S-adenosyl-L-methionine = N(6),N(6),N(6)-trimethyl-L-lysyl(20)-[histone H4] + S-adenosyl-L-homocysteine + H(+). Its function is as follows. Histone methyltransferase that specifically di- and trimethylates 'Lys-20' of histone H4 (H4K20me2/me3). H4 'Lys-20' trimethylation represents a specific tag for epigenetic transcriptional repression. Contributes to dosage compensation of X chromosome-relative to autosome-linked gene expression, possibly by converting H4K20me1 to H4K20m2/me3 on autosomes. Involved in the regulation of growth and body fat metabolism downstream of the TOR complex 2 pathway. The polypeptide is Histone-lysine N-methyltransferase Suv4-20 (Caenorhabditis briggsae).